A 355-amino-acid polypeptide reads, in one-letter code: Proto-oncogene Wnt-3 (355 aa).

The signal sequence occupies residues 1 to 21 (MEPHLLGLLLGLLLSGTRVLA). Intrachain disulfides connect Cys80-Cys91, Cys131-Cys139, Cys141-Cys158, Cys206-Cys220, Cys208-Cys215, Cys284-Cys315, Cys300-Cys310, Cys314-Cys354, Cys330-Cys345, Cys332-Cys342, and Cys337-Cys338. N-linked (GlcNAc...) asparagine glycosylation occurs at Asn90. Ser212 carries the O-palmitoleoyl serine; by PORCN lipid modification. N-linked (GlcNAc...) asparagine glycosylation is present at Asn301.

Belongs to the Wnt family. In terms of assembly, forms a soluble 1:1 complex with AFM; this prevents oligomerization and is required for prolonged biological activity. The complex with AFM may represent the physiological form in body fluids. Interacts with PORCN. Interacts with WLS. Post-translationally, palmitoleoylation is required for efficient binding to frizzled receptors. Depalmitoleoylation leads to Wnt signaling pathway inhibition. In terms of tissue distribution, detected at low levels in adult brain. Dorsal portion of the neural tube, dorsal ectoderm, the branchial arches, and the limb buds.

The protein resides in the secreted. It is found in the extracellular space. The protein localises to the extracellular matrix. In terms of biological role, ligand for members of the frizzled family of seven transmembrane receptors. Functions in the canonical Wnt signaling pathway that results in activation of transcription factors of the TCF/LEF family. Required for normal gastrulation, formation of the primitive streak, and for the formation of the mesoderm during early embryogenesis. Required for normal formation of the apical ectodermal ridge and for normal embryonic limb development. The polypeptide is Proto-oncogene Wnt-3 (Wnt3) (Mus musculus (Mouse)).